The sequence spans 461 residues: Early growth response factor homolog 1 (461 aa).

Disordered stretches follow at residues Met-1–Asn-25, Thr-96–Leu-152, and Asp-232–Leu-308. 4 stretches are compositionally biased toward polar residues: residues Thr-96–Tyr-105, Gly-129–Lys-144, Leu-249–Ser-265, and Gln-272–Pro-291. A compositionally biased stretch (low complexity) spans Tyr-299–Leu-308. 3 C2H2-type zinc fingers span residues Tyr-374–His-398, Phe-404–His-426, and Phe-432–His-454.

It belongs to the EGR C2H2-type zinc-finger protein family. In terms of tissue distribution, expressed in sheath cells and distal tip cells of the somatic gonad, as well as in the intestine and sperm (at protein level). Expression not observed in oocytes (at protein level).

It localises to the nucleus. The protein localises to the cytoplasm. The protein resides in the perinuclear region. Functionally, sequence-specific DNA-binding transcription factor. Plays a role in oocyte development, acting cell-autonomously in the somatic gonad. Involved in negative regulation of oocyte MAPK activation and inhibits oocyte maturation and ovulation. The sequence is that of Early growth response factor homolog 1 from Caenorhabditis elegans.